We begin with the raw amino-acid sequence, 118 residues long: Large ribosomal subunit protein bL19 (118 aa).

This sequence belongs to the bacterial ribosomal protein bL19 family.

Functionally, this protein is located at the 30S-50S ribosomal subunit interface and may play a role in the structure and function of the aminoacyl-tRNA binding site. This Campylobacter hominis (strain ATCC BAA-381 / DSM 21671 / CCUG 45161 / LMG 19568 / NCTC 13146 / CH001A) protein is Large ribosomal subunit protein bL19.